A 212-amino-acid chain; its full sequence is Leucine efflux protein (212 aa).

Helical transmembrane passes span 5–25, 49–69, 81–101, 122–142, 153–173, and 188–208; these read FGVLNYLTYLVGAVFIILVPG, GVFIGDAVLMFLAFAGVATLI, YLGAIYLLWLGGKMLYAVLTQ, TLSLTNPKAILFYVSFFVQFI, FFILALTLEVISFCYMSFLIL, and LAKLGNSLIGLVFVGFAARLA.

The protein belongs to the Rht family.

The protein localises to the cell inner membrane. The enzyme catalyses L-leucine(in) + H(+)(out) = L-leucine(out) + H(+)(in). Functionally, exporter of leucine. In Klebsiella pneumoniae subsp. pneumoniae (strain ATCC 700721 / MGH 78578), this protein is Leucine efflux protein (leuE).